A 405-amino-acid polypeptide reads, in one-letter code: NAC transcription factor NAM-A1 (405 aa).

The span at 1-10 (MGSSDSSSGS) shows a compositional bias: low complexity. A disordered region spans residues 1–38 (MGSSDSSSGSAQKAARHQHEPPPPRQRGSAPELPPGFR). The NAC domain maps to 33–204 (LPPGFRFHPT…DWVLCRIYKK (172 aa)). A DNA-binding region spans residues 137–210 (LGVKKALVFY…IYKKINKAAA (74 aa)).

As to expression, expressed in flag leaves, green spikes and peduncles.

It is found in the nucleus. Functionally, transcription factor of the NAC family associated with the grain protein content (GPC). Accelerates senescence and increases nutrient remobilization from leaves to developing grains. The tetraploid cultivated wheat (T.durum) contains one additional gene coding for a functional protein (NAM-B2) and one extra pseudogene (NAM-B1). This chain is NAC transcription factor NAM-A1 (NAM-A1), found in Triticum turgidum subsp. durum (Durum wheat).